A 655-amino-acid polypeptide reads, in one-letter code: Large subunit GTPase 1 homolog (655 aa).

Residues Met1–Asp31 form a disordered region. A compositionally biased stretch (basic residues) spans Leu16 to Arg28. Residues Ser93 and Ser97 each carry the phosphoserine modification. The region spanning Trp164 to Pro441 is the CP-type G domain. Asn212–Asp215 is a GTP binding site. Ser252 carries the phosphoserine modification. The tract at residues Lys253–His359 is disordered. Residues Glu288 to Gly327 are compositionally biased toward acidic residues. Basic and acidic residues predominate over residues Gly328 to Glu339. Polar residues predominate over residues Gln344–His359. Residues Gly390 to Ser397 and Asp434 to Gly437 each bind GTP. The interval Ser625–Val655 is disordered. The span at Pro633 to Val655 shows a compositional bias: basic residues.

This sequence belongs to the TRAFAC class YlqF/YawG GTPase family. LSG1 subfamily.

Its subcellular location is the cytoplasm. It is found in the endoplasmic reticulum. The protein resides in the nucleus. The protein localises to the cajal body. It carries out the reaction GTP + H2O = GDP + phosphate + H(+). Functionally, functions as a GTPase. May act by mediating the release of NMD3 from the 60S ribosomal subunit after export into the cytoplasm during the 60S ribosomal subunit maturation. This chain is Large subunit GTPase 1 homolog, found in Rattus norvegicus (Rat).